Reading from the N-terminus, the 269-residue chain is MNAHVTPDSVTADSDETWTVAGRTFRSRLIVGTGKYKDYATNAAAARAAGAEIVTVAVRRVNLTDPSQPLLVDYVKPTEFTYLPNTAGCFTGEDAVRTLRLAREAGGWDLVKLEVLSDPKTLFPDMEETLRSLKLLVADGFQVMVYCSDDPVYARKLEEAGAVAIMPLGAPIGSGLGIQNRVNLRIIIENAKVPVLVDAGVGTASDAAIGMELGCDAILMNTAIAEAKDPIRMAKAMKHAVIAGREAYLAGRMQKRLYADPSSPLAGLI.

The Schiff-base intermediate with DXP role is filled by Lys112. 1-deoxy-D-xylulose 5-phosphate-binding positions include Gly173, Ala199–Gly200, and Asn221–Thr222.

The protein belongs to the ThiG family. As to quaternary structure, homotetramer. Forms heterodimers with either ThiH or ThiS.

The protein resides in the cytoplasm. It catalyses the reaction [ThiS sulfur-carrier protein]-C-terminal-Gly-aminoethanethioate + 2-iminoacetate + 1-deoxy-D-xylulose 5-phosphate = [ThiS sulfur-carrier protein]-C-terminal Gly-Gly + 2-[(2R,5Z)-2-carboxy-4-methylthiazol-5(2H)-ylidene]ethyl phosphate + 2 H2O + H(+). Its pathway is cofactor biosynthesis; thiamine diphosphate biosynthesis. Its function is as follows. Catalyzes the rearrangement of 1-deoxy-D-xylulose 5-phosphate (DXP) to produce the thiazole phosphate moiety of thiamine. Sulfur is provided by the thiocarboxylate moiety of the carrier protein ThiS. In vitro, sulfur can be provided by H(2)S. The chain is Thiazole synthase from Caulobacter vibrioides (strain ATCC 19089 / CIP 103742 / CB 15) (Caulobacter crescentus).